The following is a 376-amino-acid chain: 3-dehydroquinate synthase (376 aa).

NAD(+)-binding positions include 115-119 (GVIGD), 139-140 (TS), Lys152, and Lys161. Zn(2+) is bound by residues Glu194, His256, and His275.

Belongs to the sugar phosphate cyclases superfamily. Dehydroquinate synthase family. The cofactor is Co(2+). Requires Zn(2+) as cofactor. NAD(+) is required as a cofactor.

Its subcellular location is the cytoplasm. It carries out the reaction 7-phospho-2-dehydro-3-deoxy-D-arabino-heptonate = 3-dehydroquinate + phosphate. It participates in metabolic intermediate biosynthesis; chorismate biosynthesis; chorismate from D-erythrose 4-phosphate and phosphoenolpyruvate: step 2/7. Functionally, catalyzes the conversion of 3-deoxy-D-arabino-heptulosonate 7-phosphate (DAHP) to dehydroquinate (DHQ). This Rhizobium leguminosarum bv. trifolii (strain WSM2304) protein is 3-dehydroquinate synthase.